The sequence spans 69 residues: Sec-independent protein translocase protein TatA (69 aa).

The helical transmembrane segment at 1–21 (MFPKLGMGELVVILLIVVILF) threads the bilayer. The interval 43-69 (SFSGEDEEKPSTPGATSSDEASKAKQA) is disordered.

This sequence belongs to the TatA/E family. In terms of assembly, the Tat system comprises two distinct complexes: a TatABC complex, containing multiple copies of TatA, TatB and TatC subunits, and a separate TatA complex, containing only TatA subunits. Substrates initially bind to the TatABC complex, which probably triggers association of the separate TatA complex to form the active translocon.

It is found in the cell inner membrane. In terms of biological role, part of the twin-arginine translocation (Tat) system that transports large folded proteins containing a characteristic twin-arginine motif in their signal peptide across membranes. TatA could form the protein-conducting channel of the Tat system. The sequence is that of Sec-independent protein translocase protein TatA from Anaeromyxobacter sp. (strain Fw109-5).